Reading from the N-terminus, the 285-residue chain is Vacuolar protein sorting-associated protein 37B (285 aa).

An interaction with IST1 region spans residues 50 to 170; the sequence is ASNRSLAEGN…ELVLKGQRHP (121 aa). The region spanning 84 to 173 is the VPS37 C-terminal domain; the sequence is FEAYQIKKTK…LKGQRHPQAG (90 aa). 2 disordered regions span residues 167 to 215 and 242 to 285; these read QRHP…PPVP and PLPP…FILQ. Pro residues-rich tracts occupy residues 173-184 and 206-215; these read GAPPPPRVPEPS and RIPPPPPPVP. Residues 250-259 show a composition bias toward polar residues; sequence PSQQGFSAQL. The span at 262–275 shows a compositional bias: pro residues; that stretch reads PYPPALPQRPPPRM. A compositionally biased stretch (low complexity) spans 276–285; the sequence is APHQPGFILQ.

This sequence belongs to the VPS37 family. In terms of assembly, component of the ESCRT-I complex (endosomal sorting complex required for transport I) which consists of TSG101, VPS28, a VPS37 protein (VPS37A to -D) and MVB12A or MVB12B in a 1:1:1:1 stoichiometry. Interacts with TSG101, VPS28, MVB12A and MVB12B. Component of the ESCRT-I complex (endosomal sorting complex required for transport I) which consists of TSG101, VPS28, a VPS37 protein (VPS37A to -D) and UBAP1 in a 1:1:1:1 stoichiometry. Interacts with CEP55. Interacts with IST1.

Its subcellular location is the late endosome membrane. Functionally, component of the ESCRT-I complex, a regulator of vesicular trafficking process. Required for the sorting of endocytic ubiquitinated cargos into multivesicular bodies. May be involved in cell growth and differentiation. In Mus musculus (Mouse), this protein is Vacuolar protein sorting-associated protein 37B (Vps37b).